Reading from the N-terminus, the 606-residue chain is Aspartate--tRNA(Asp/Asn) ligase (606 aa).

Position 172 (Glu-172) interacts with L-aspartate. The tract at residues Gln-196 to Lys-199 is aspartate. Residue Arg-218 participates in L-aspartate binding. Residues Arg-218–Glu-220 and Gln-227 contribute to the ATP site. An L-aspartate-binding site is contributed by His-448. ATP is bound at residue Glu-482. Arg-489 is a binding site for L-aspartate. Position 534–537 (Gly-534–Arg-537) interacts with ATP.

This sequence belongs to the class-II aminoacyl-tRNA synthetase family. Type 1 subfamily. In terms of assembly, homodimer.

It localises to the cytoplasm. It carries out the reaction tRNA(Asx) + L-aspartate + ATP = L-aspartyl-tRNA(Asx) + AMP + diphosphate. Functionally, aspartyl-tRNA synthetase with relaxed tRNA specificity since it is able to aspartylate not only its cognate tRNA(Asp) but also tRNA(Asn). Reaction proceeds in two steps: L-aspartate is first activated by ATP to form Asp-AMP and then transferred to the acceptor end of tRNA(Asp/Asn). The sequence is that of Aspartate--tRNA(Asp/Asn) ligase from Saccharopolyspora erythraea (strain ATCC 11635 / DSM 40517 / JCM 4748 / NBRC 13426 / NCIMB 8594 / NRRL 2338).